A 141-amino-acid chain; its full sequence is Large ribosomal subunit protein uL16 (141 aa).

The segment at Met-1–Arg-23 is disordered.

This sequence belongs to the universal ribosomal protein uL16 family. As to quaternary structure, part of the 50S ribosomal subunit.

Binds 23S rRNA and is also seen to make contacts with the A and possibly P site tRNAs. The polypeptide is Large ribosomal subunit protein uL16 (Helicobacter pylori (strain P12)).